The chain runs to 374 residues: DNA primase small subunit PriS (374 aa).

Residues aspartate 99, aspartate 101, and aspartate 281 contribute to the active site.

Belongs to the eukaryotic-type primase small subunit family. As to quaternary structure, heterodimer of a small subunit (PriS) and a large subunit (PriL). Mg(2+) is required as a cofactor. Requires Mn(2+) as cofactor.

Its function is as follows. Catalytic subunit of DNA primase, an RNA polymerase that catalyzes the synthesis of short RNA molecules used as primers for DNA polymerase during DNA replication. The small subunit contains the primase catalytic core and has DNA synthesis activity on its own. Binding to the large subunit stabilizes and modulates the activity, increasing the rate of DNA synthesis while decreasing the length of the DNA fragments, and conferring RNA synthesis capability. The DNA polymerase activity may enable DNA primase to also catalyze primer extension after primer synthesis. May also play a role in DNA repair. The polypeptide is DNA primase small subunit PriS (Methanoregula boonei (strain DSM 21154 / JCM 14090 / 6A8)).